A 539-amino-acid polypeptide reads, in one-letter code: Cytochrome P450 monooxygenase tenB (539 aa).

A helical transmembrane segment spans residues 13 to 33 (LGYYEKVAGVLGFLSIALLFW). Positions 439-460 (PFRFSRASKDDDDDGKSTSSHA) are disordered. Cys481 is a binding site for heme.

It belongs to the cytochrome P450 family. The cofactor is heme.

It is found in the membrane. It functions in the pathway secondary metabolite biosynthesis. Its function is as follows. Cytochrome P450 monooxygenase; part of the gene cluster that mediates the biosynthesis of tenellin-type 2-pyridones, iron-chelating compounds involved in iron stress tolerance, competition with the natural competitor fungus Metarhizium robertsii and insect hosts infection. TenB catalyzes the selective N-hydroxylation of the 2-pyridone nitrogen of yield tellinin and 15-hydroxytellenin (15-HT), respectively. The pathway begins with the assembly of the polyketide-amino acid backbone by the hybrid PKS-NRPS tenS with the help of the enoyl reductase tenC. These enzymes catalyze the synthesis of the pyrrolidine-2-dione intermediates pretellinin A, 11-hydropretellenin A, 12-hydropretellenin A, 13-hydropretellenin A, 14-hydropretellenin A, 12-oxopretellenin A and prototellinin D. The cytochrome P450 monooxygenase tenA then catalyzes an oxidative ring expansion of pretenellin A and 14-hydropretellenin A to form the 2-pyridone core, leading to pretenellin B and pyridovericin, respectively. The cytochrome P450 monooxygenase tenB is then required for the selective N-hydroxylation of the 2-pyridone nitrogen of yield tellinin and 15-hydroxytellenin (15-HT), respectively. The UDP-glucosyltransferase GT1 and the methyltransferase MT1, located outside the tenS gene cluster, contribute to the stepwise glycosylation and methylation of 15-HT to obtain the glycoside pyridovericin-N-O-(4-O-methyl-beta-D-glucopyranoside) (PMGP). Additional related compounds such as 1-O-methyl-15-HT, (8Z)-1-O-methyl-15-HT, and O-methyltenellin A are also produced but the enzymes involved in their biosynthesis have still to be determined. The sequence is that of Cytochrome P450 monooxygenase tenB from Beauveria bassiana (White muscardine disease fungus).